A 237-amino-acid chain; its full sequence is NADH-ubiquinone oxidoreductase assembly factor N7BML (237 aa).

The span at 214–223 (VEKERDDSGK) shows a compositional bias: basic and acidic residues. The interval 214 to 237 (VEKERDDSGKPAEWTPKAAVRRRG) is disordered.

The protein belongs to the complex I NDUFA12 subunit family.

The protein localises to the mitochondrion. Functionally, acts as an assembly factor of mitochondrial complex I. The sequence is that of NADH-ubiquinone oxidoreductase assembly factor N7BML from Yarrowia lipolytica (strain CLIB 122 / E 150) (Yeast).